A 169-amino-acid chain; its full sequence is Peptide deformylase (169 aa).

2 residues coordinate Fe cation: C93 and H135. E136 is a catalytic residue. Residue H139 participates in Fe cation binding.

The protein belongs to the polypeptide deformylase family. Fe(2+) is required as a cofactor.

The enzyme catalyses N-terminal N-formyl-L-methionyl-[peptide] + H2O = N-terminal L-methionyl-[peptide] + formate. In terms of biological role, removes the formyl group from the N-terminal Met of newly synthesized proteins. Requires at least a dipeptide for an efficient rate of reaction. N-terminal L-methionine is a prerequisite for activity but the enzyme has broad specificity at other positions. The chain is Peptide deformylase from Aquifex aeolicus (strain VF5).